The following is a 733-amino-acid chain: 1,4-alpha-glucan branching enzyme GlgB (733 aa).

Residue Asp409 is the Nucleophile of the active site. Glu462 serves as the catalytic Proton donor.

This sequence belongs to the glycosyl hydrolase 13 family. GlgB subfamily. In terms of assembly, monomer.

The catalysed reaction is Transfers a segment of a (1-&gt;4)-alpha-D-glucan chain to a primary hydroxy group in a similar glucan chain.. It functions in the pathway glycan biosynthesis; glycogen biosynthesis. In terms of biological role, catalyzes the formation of the alpha-1,6-glucosidic linkages in glycogen by scission of a 1,4-alpha-linked oligosaccharide from growing alpha-1,4-glucan chains and the subsequent attachment of the oligosaccharide to the alpha-1,6 position. This Gloeobacter violaceus (strain ATCC 29082 / PCC 7421) protein is 1,4-alpha-glucan branching enzyme GlgB.